We begin with the raw amino-acid sequence, 1042 residues long: Carbamoyl phosphate synthase large chain (1042 aa).

The interval 1–417 (MTEDSRTILL…SLLKALRSSE (417 aa)) is carboxyphosphate synthetic domain. ATP is bound by residues Arg-127, Arg-182, Gly-188, Gly-189, Glu-221, Ile-223, Glu-228, Gly-254, Ile-255, His-256, Gln-297, and Glu-314. In terms of domain architecture, ATP-grasp 1 spans 131 to 343 (RQRMADLGQP…IARVTAKVAL (213 aa)). The Mg(2+) site is built by Gln-297, Glu-314, and Asn-316. Positions 297, 314, and 316 each coordinate Mn(2+). Residues 418–558 (YDPSVDWATV…SQGSTGSDVR (141 aa)) form an oligomerization domain region. A carbamoyl phosphate synthetic domain region spans residues 559–947 (ADRDAHSVVI…WKAQVAASNA (389 aa)). The 192-residue stretch at 689-880 (NRLLDERDIS…IAKLAAKVMA (192 aa)) folds into the ATP-grasp 2 domain. ATP contacts are provided by Arg-725, Glu-764, Leu-766, Glu-771, Gly-796, Val-797, His-798, Ser-799, Gln-839, and Glu-851. Mg(2+)-binding residues include Gln-839, Glu-851, and Asn-853. Positions 839, 851, and 853 each coordinate Mn(2+). The region spanning 947 to 1042 (APVPGSTAVV…DRPVNDETWG (96 aa)) is the MGS-like domain. Residues 948–1042 (PVPGSTAVVD…DRPVNDETWG (95 aa)) are allosteric domain.

It belongs to the CarB family. As to quaternary structure, composed of two chains; the small (or glutamine) chain promotes the hydrolysis of glutamine to ammonia, which is used by the large (or ammonia) chain to synthesize carbamoyl phosphate. Tetramer of heterodimers (alpha,beta)4. The cofactor is Mg(2+). Requires Mn(2+) as cofactor.

It carries out the reaction hydrogencarbonate + L-glutamine + 2 ATP + H2O = carbamoyl phosphate + L-glutamate + 2 ADP + phosphate + 2 H(+). The enzyme catalyses hydrogencarbonate + NH4(+) + 2 ATP = carbamoyl phosphate + 2 ADP + phosphate + 2 H(+). It functions in the pathway amino-acid biosynthesis; L-arginine biosynthesis; carbamoyl phosphate from bicarbonate: step 1/1. Its pathway is pyrimidine metabolism; UMP biosynthesis via de novo pathway; (S)-dihydroorotate from bicarbonate: step 1/3. Functionally, large subunit of the glutamine-dependent carbamoyl phosphate synthetase (CPSase). CPSase catalyzes the formation of carbamoyl phosphate from the ammonia moiety of glutamine, carbonate, and phosphate donated by ATP, constituting the first step of 2 biosynthetic pathways, one leading to arginine and/or urea and the other to pyrimidine nucleotides. The large subunit (synthetase) binds the substrates ammonia (free or transferred from glutamine from the small subunit), hydrogencarbonate and ATP and carries out an ATP-coupled ligase reaction, activating hydrogencarbonate by forming carboxy phosphate which reacts with ammonia to form carbamoyl phosphate. The protein is Carbamoyl phosphate synthase large chain of Halobacterium salinarum (strain ATCC 700922 / JCM 11081 / NRC-1) (Halobacterium halobium).